The chain runs to 148 residues: Endothelial differentiation-related factor 1 (148 aa).

Position 2 is an N-acetylalanine (A2). S4 carries the post-translational modification Phosphoserine. Residue K25 is modified to N6-methyllysine. The tract at residues 34–67 (RGEDVETSKKWAAGQNKQHSITKNTAKLDRETEE) is disordered. Residues 37-113 (DVETSKKWAA…QVIADYESGR (77 aa)) are interaction with NR5A2, PPARG and NR1H3. A compositionally biased stretch (polar residues) spans 48–58 (QNKQHSITKNT). Residues 69 to 108 (HHDRVTLEVGKVIQRGRQSKGLTQKDLATKINEKPQVIAD) form an interaction with TBP and NR5A1 region. Positions 81-88 (IQRGRQSK) match the IQ motif motif. The HTH cro/C1-type domain occupies 81-135 (IQRGRQSKGLTQKDLATKINEKPQVIADYESGRAIPNNQVLGKIERAIGLKLRGK). The H-T-H motif DNA-binding region spans 92–111 (QKDLATKINEKPQVIADYES).

As to quaternary structure, interacts with TBP and the transcription factor IID (TFIID) complex, NR5A2, NR1H3 and PPARG. Interaction with TBP is regulated by phosphorylation. Binds NR5A1, ATF1, FOS and JUN via their conserved basic region. Binding to calmodulin is regulated by calcium and phosphorylation of the IQ motif. Phosphorylated. In terms of tissue distribution, expressed in brain, liver, kidney and heart (at protein level). Also expressed in testis.

The protein localises to the cytoplasm. The protein resides in the nucleus. In terms of biological role, transcriptional coactivator stimulating NR5A1 and ligand-dependent NR1H3/LXRA and PPARG transcriptional activities. Enhances the DNA-binding activity of ATF1, ATF2, CREB1 and NR5A1. Regulates nitric oxid synthase activity probably by sequestering calmodulin in the cytoplasm. Might function in endothelial cells differentiation, hormone-induced cardiomyocytes hypertrophy and lipid metabolism. This is Endothelial differentiation-related factor 1 (Edf1) from Mus musculus (Mouse).